Here is a 151-residue protein sequence, read N- to C-terminus: Prefoldin subunit 5 (151 aa).

Positions 15–35 form a coiled coil; that stretch reads IDQLKALKEQADLEVNLLQDS.

The protein belongs to the prefoldin subunit alpha family. As to quaternary structure, heterohexamer of two PFD-alpha type and four PFD-beta type subunits forming prefoldin co-chaperone complex. Interacts with PFD6. Binds to the DELLA protein GAI.

The protein localises to the cytoplasm. It is found in the nucleus. Functionally, binds specifically to cytosolic chaperonin (c-CPN) and transfers target proteins to it. Binds to nascent polypeptide chain and promotes folding in an environment in which there are many competing pathways for nonnative proteins. Together with other chaperonins, contribute to the regulation of gene expression by modulating the spliceosome function on pre-mRNA splicing post-transcriptionally by acting as a co-chaperone of Hsp90 to control levels of LSM8. Required for the biogenesis of tubulins and for subsequent microtubules (MTs) organization and dynamicity. Necessary for tolerance to NaCl salt stress. Involved in the process leading to microtubules dissociation in response to gibberellic acid (GA) probably due to the DELLA proteins-mediated translocation of the prefoldin co-chaperone complex from the cytoplasm to the nucleus. Prevents cold acclimation (e.g. 7 days at 4 degrees Celsius) in a DELLA proteins-dependent manner by promoting nuclear proteasome-mediated HY5 degradation, thus modulating the expression of several genes and reducing anthocyanin biosynthesis, but seems not involved in constitutive freezing tolerance. Contributes to the GA-dependent regulation of PIN2 trafficking at the plasma membrane, thus influencing auxin flux. This chain is Prefoldin subunit 5, found in Arabidopsis thaliana (Mouse-ear cress).